Consider the following 275-residue polypeptide: Ribosomal RNA small subunit methyltransferase A (275 aa).

Asn20, Leu22, Gly47, Glu68, Asp90, and Asn110 together coordinate S-adenosyl-L-methionine.

The protein belongs to the class I-like SAM-binding methyltransferase superfamily. rRNA adenine N(6)-methyltransferase family. RsmA subfamily.

The protein localises to the cytoplasm. The enzyme catalyses adenosine(1518)/adenosine(1519) in 16S rRNA + 4 S-adenosyl-L-methionine = N(6)-dimethyladenosine(1518)/N(6)-dimethyladenosine(1519) in 16S rRNA + 4 S-adenosyl-L-homocysteine + 4 H(+). Functionally, specifically dimethylates two adjacent adenosines (A1518 and A1519) in the loop of a conserved hairpin near the 3'-end of 16S rRNA in the 30S particle. May play a critical role in biogenesis of 30S subunits. This chain is Ribosomal RNA small subunit methyltransferase A, found in Chlorobaculum tepidum (strain ATCC 49652 / DSM 12025 / NBRC 103806 / TLS) (Chlorobium tepidum).